Here is a 406-residue protein sequence, read N- to C-terminus: Tryptophan synthase beta chain (406 aa).

N6-(pyridoxal phosphate)lysine is present on lysine 99.

The protein belongs to the TrpB family. In terms of assembly, tetramer of two alpha and two beta chains. The cofactor is pyridoxal 5'-phosphate.

The enzyme catalyses (1S,2R)-1-C-(indol-3-yl)glycerol 3-phosphate + L-serine = D-glyceraldehyde 3-phosphate + L-tryptophan + H2O. It participates in amino-acid biosynthesis; L-tryptophan biosynthesis; L-tryptophan from chorismate: step 5/5. The beta subunit is responsible for the synthesis of L-tryptophan from indole and L-serine. This Brucella canis (strain ATCC 23365 / NCTC 10854 / RM-666) protein is Tryptophan synthase beta chain.